The primary structure comprises 336 residues: Acyl-CoA-binding domain-containing protein 4 (336 aa).

Residues 12–32 traverse the membrane as a helical; Signal-anchor segment; sequence AVIGLLFAFLVAKLISTVIAF. The segment at 40-88 is disordered; the sequence is TRSTPTSPSAADTPAAPAPPPASLDGGHGDTSDGSGSDSDSDWEGVEST. Over residues 42 to 54 the composition is skewed to low complexity; it reads STPTSPSAADTPA. Over residues 78-88 the composition is skewed to acidic residues; the sequence is SDSDWEGVEST. Positions 90-178 constitute an ACB domain; sequence LDEEFSAASA…VDELFPNWSM (89 aa). An acyl-CoA-binding positions include 120–124, Lys142, Lys146, and Tyr165; that span reads YGLYK. N-linked (GlcNAc...) asparagine glycosylation is present at Asn175. The segment at 179-202 is disordered; the sequence is GSSTKRKDEDTTVSASSSKGPMGP. Residue Asn216 is glycosylated (N-linked (GlcNAc...) asparagine). ANK repeat units follow at residues 251–280 and 284–313; these read EGRTPLHWAVDRGHLNSVEILVNANADVNA and EGQTALHYAVLCEREDIAELLVKHHADVQI.

This sequence belongs to the ACBP family. In terms of tissue distribution, highly expressed in leaves. Expressed at low levels in roots and seeds.

It localises to the endoplasmic reticulum membrane. In terms of biological role, binds medium- and long-chain acyl-CoA esters with high affinity. Can interact in vitro with palmitoyl-CoA, linoleoyl-CoA and linolenoyl-CoA. Binds phosphatidic acid (PA) and phosphatidylcholine (PC) in vitro. May play a role in the biosynthesis of phospholipids. The chain is Acyl-CoA-binding domain-containing protein 4 from Oryza sativa subsp. japonica (Rice).